Reading from the N-terminus, the 719-residue chain is Polyribonucleotide nucleotidyltransferase (719 aa).

Mg(2+) contacts are provided by aspartate 495 and aspartate 501. Residues 562 to 621 (PRRLSFRIDPELIGTVIGPGGRTIKGITERTNTKIDIEDTGIVTVASHDGAAAEEAQKII) enclose the KH domain. The S1 motif domain maps to 631–699 (GEYFDGKVTR…NRGRINLTLR (69 aa)). Residues 699–719 (RGVPQDGSDPQPTVILPIGES) form a disordered region.

It belongs to the polyribonucleotide nucleotidyltransferase family. Requires Mg(2+) as cofactor.

It is found in the cytoplasm. It catalyses the reaction RNA(n+1) + phosphate = RNA(n) + a ribonucleoside 5'-diphosphate. In terms of biological role, involved in mRNA degradation. Catalyzes the phosphorolysis of single-stranded polyribonucleotides processively in the 3'- to 5'-direction. In Synechococcus sp. (strain RCC307), this protein is Polyribonucleotide nucleotidyltransferase.